The primary structure comprises 132 residues: Cell division protein FtsL (132 aa).

The Cytoplasmic portion of the chain corresponds to 1–50 (MAELKKMRHNHYDVPVMDEPVIASQIKKTNQKKESFQLPQKKLNKISVFE). Residues 51-71 (KILCILLLCSIVGIVVITIQI) traverse the membrane as a helical segment. Residues 72-132 (RTTISETMNN…EIDGNLRKVK (61 aa)) are Extracellular-facing.

It belongs to the FtsL family.

The protein localises to the cell membrane. In terms of biological role, essential cell division protein. In Melissococcus plutonius (strain ATCC 35311 / DSM 29964 / CIP 104052 / LMG 20360 / NCIMB 702443), this protein is Cell division protein FtsL.